Reading from the N-terminus, the 360-residue chain is MSNLENLQSQILADIAAAADEAALEAVRVGALGKKGSISALLATLGKMDPEQRKTEGAAINRAKEAVTDALTARRDVLKAAALDAKLAAETIDVTLPMREPAAEQGRLHPLSQVWDELTAIFADMGFSIAEGPDIETDDYNFTKLNFPEGHPAREMHDTFYFNPKEDGSRLLLRTHTSPVQVRTMLSQRPPIRVICPGRTYRSDSDQTHTPMFHQVEGLVIDKGSHLGHLKWILHEFCKAFFEVDNVNMRFRPSFFPFTEPSLEVDIQCRRGKDEIRFGEGEDWLEILGCGMVHPNVLTACGLDPDEYQGFAWGMGIDRIAMLKYGMSDLRQLFEADVRWLNHYGFKPLDIPTLAGGLSS.

Glu260 is a binding site for Mg(2+).

This sequence belongs to the class-II aminoacyl-tRNA synthetase family. Phe-tRNA synthetase alpha subunit type 1 subfamily. Tetramer of two alpha and two beta subunits. The cofactor is Mg(2+).

Its subcellular location is the cytoplasm. The enzyme catalyses tRNA(Phe) + L-phenylalanine + ATP = L-phenylalanyl-tRNA(Phe) + AMP + diphosphate + H(+). In Rhodopseudomonas palustris (strain ATCC BAA-98 / CGA009), this protein is Phenylalanine--tRNA ligase alpha subunit.